Here is a 188-residue protein sequence, read N- to C-terminus: Elongation factor P (188 aa).

Residue K34 is modified to N6-(3,6-diaminohexanoyl)-5-hydroxylysine.

This sequence belongs to the elongation factor P family. In terms of processing, may be beta-lysylated on the epsilon-amino group of Lys-34 by the combined action of EpmA and EpmB, and then hydroxylated on the C5 position of the same residue by EpmC (if this protein is present). Lysylation is critical for the stimulatory effect of EF-P on peptide-bond formation. The lysylation moiety may extend toward the peptidyltransferase center and stabilize the terminal 3-CCA end of the tRNA. Hydroxylation of the C5 position on Lys-34 may allow additional potential stabilizing hydrogen-bond interactions with the P-tRNA.

It localises to the cytoplasm. It functions in the pathway protein biosynthesis; polypeptide chain elongation. Functionally, involved in peptide bond synthesis. Alleviates ribosome stalling that occurs when 3 or more consecutive Pro residues or the sequence PPG is present in a protein, possibly by augmenting the peptidyl transferase activity of the ribosome. Modification of Lys-34 is required for alleviation. The protein is Elongation factor P of Vibrio campbellii (strain ATCC BAA-1116).